Reading from the N-terminus, the 411-residue chain is Prophage integrase IntR (411 aa).

In terms of domain architecture, Core-binding (CB) spans 81 to 176 (KTFGELCDIW…LLCSLLRFAY (96 aa)). The Tyr recombinase domain maps to 197 to 404 (IKPDPLSKTE…IDDMNDEQIA (208 aa)). Residues Arg-231, Lys-266, Arg-358, and His-381 contribute to the active site. Catalysis depends on Tyr-391, which acts as the O-(3'-phospho-DNA)-tyrosine intermediate.

It belongs to the 'phage' integrase family.

Functionally, integrase is necessary for integration of the phage into the host genome by site-specific recombination. In conjunction with excisionase, integrase is also necessary for excision of the prophage from the host genome. This is Prophage integrase IntR (intR) from Escherichia coli (strain K12).